The primary structure comprises 227 residues: Sperm-associated antigen 7 (227 aa).

Residues 1 to 45 form a disordered region; that stretch reads MADLLGSILSSMEKPPSLGDQESRRKAREQAARLKKLQEQDKQQK. At A2 the chain carries N-acetylalanine. The segment covering 21-45 has biased composition (basic and acidic residues); it reads QESRRKAREQAARLKKLQEQDKQQK. Positions 35–51 match the Nuclear localization signal motif; the sequence is KKLQEQDKQQKVEFRKR. The R3H domain maps to 46-109; the sequence is VEFRKRMEKE…DCRYVMIFKK (64 aa). The residue at position 114 (S114) is a Phosphoserine. Positions 118–161 are disordered; sequence LDSYRHGEEWDPQKAEEKRKLKELAQKQEEEAAQQGPAVVSPAS. The segment covering 119-147 has biased composition (basic and acidic residues); that stretch reads DSYRHGEEWDPQKAEEKRKLKELAQKQEE. The Nuclear localization signal signature appears at 122 to 139; the sequence is RHGEEWDPQKAEEKRKLK. Residues S158 and S202 each carry the phosphoserine modification.

The protein resides in the nucleus. The chain is Sperm-associated antigen 7 (Spag7) from Mus musculus (Mouse).